Consider the following 776-residue polypeptide: Conserved oligomeric Golgi complex subunit 4 (776 aa).

Phosphoserine is present on residues Ser342 and Ser345.

The protein belongs to the COG4 family. Component of the conserved oligomeric Golgi complex which is composed of eight different subunits and is required for normal Golgi morphology and localization.

The protein resides in the golgi apparatus membrane. Its function is as follows. Required for normal Golgi function. This Drosophila melanogaster (Fruit fly) protein is Conserved oligomeric Golgi complex subunit 4.